The sequence spans 332 residues: 4-hydroxy-3-methylbut-2-enyl diphosphate reductase (332 aa).

C13 contributes to the [4Fe-4S] cluster binding site. The (2E)-4-hydroxy-3-methylbut-2-enyl diphosphate site is built by H41 and H75. Dimethylallyl diphosphate is bound by residues H41 and H75. The isopentenyl diphosphate site is built by H41 and H75. C97 provides a ligand contact to [4Fe-4S] cluster. (2E)-4-hydroxy-3-methylbut-2-enyl diphosphate is bound at residue H125. H125 contacts dimethylallyl diphosphate. Residue H125 coordinates isopentenyl diphosphate. E127 acts as the Proton donor in catalysis. A (2E)-4-hydroxy-3-methylbut-2-enyl diphosphate-binding site is contributed by T168. C229 contributes to the [4Fe-4S] cluster binding site. Residues S257, S258, N259, and S306 each contribute to the (2E)-4-hydroxy-3-methylbut-2-enyl diphosphate site. Residues S257, S258, N259, and S306 each contribute to the dimethylallyl diphosphate site. Isopentenyl diphosphate-binding residues include S257, S258, N259, and S306.

Belongs to the IspH family. [4Fe-4S] cluster is required as a cofactor.

It carries out the reaction isopentenyl diphosphate + 2 oxidized [2Fe-2S]-[ferredoxin] + H2O = (2E)-4-hydroxy-3-methylbut-2-enyl diphosphate + 2 reduced [2Fe-2S]-[ferredoxin] + 2 H(+). The enzyme catalyses dimethylallyl diphosphate + 2 oxidized [2Fe-2S]-[ferredoxin] + H2O = (2E)-4-hydroxy-3-methylbut-2-enyl diphosphate + 2 reduced [2Fe-2S]-[ferredoxin] + 2 H(+). The protein operates within isoprenoid biosynthesis; dimethylallyl diphosphate biosynthesis; dimethylallyl diphosphate from (2E)-4-hydroxy-3-methylbutenyl diphosphate: step 1/1. Its pathway is isoprenoid biosynthesis; isopentenyl diphosphate biosynthesis via DXP pathway; isopentenyl diphosphate from 1-deoxy-D-xylulose 5-phosphate: step 6/6. Its function is as follows. Catalyzes the conversion of 1-hydroxy-2-methyl-2-(E)-butenyl 4-diphosphate (HMBPP) into a mixture of isopentenyl diphosphate (IPP) and dimethylallyl diphosphate (DMAPP). Acts in the terminal step of the DOXP/MEP pathway for isoprenoid precursor biosynthesis. In Chlorobaculum tepidum (strain ATCC 49652 / DSM 12025 / NBRC 103806 / TLS) (Chlorobium tepidum), this protein is 4-hydroxy-3-methylbut-2-enyl diphosphate reductase.